We begin with the raw amino-acid sequence, 427 residues long: MKAKVEKIETNVIKLEIRVEAEKFDAALTKAYNKNKGRYNIPGFRKGKVPMAMVKKFYGVEVFYDDAVNFAIDESYPEALNAENIKPVDYPQVDIVELGEGKELVYTATVTTYPEVELGEYKGLDIKKPIYEVEDTEIDKQIKEMQEKNARIEVKTEGNIAKGDIAVIDFKGYIDGVAFEGGEGSDYSLEIGSGTFIDNFEEQLIGLAVGDKKEVNVTFPEAYGKEELNGKPAMFEVEIKSIKVKELPELDDEFAKDVSAVDTFAELKENLKKTLEKNNDEKAEREFEEAVITAVIENSKMDIPEVMVNKEIDAMMQDLEGRLKYQGLSLEQYMEFTGNTTEKMRDFMKENAERKVKADLVLEAIAKTEEIKATEEELNARALELGKIYGPKDPEKMAKILVKSQRNMIEKDIILENTLKFLKENCK.

The PPIase FKBP-type domain occupies G163–P248.

The protein belongs to the FKBP-type PPIase family. Tig subfamily.

The protein localises to the cytoplasm. The enzyme catalyses [protein]-peptidylproline (omega=180) = [protein]-peptidylproline (omega=0). Involved in protein export. Acts as a chaperone by maintaining the newly synthesized protein in an open conformation. Functions as a peptidyl-prolyl cis-trans isomerase. This chain is Trigger factor, found in Clostridium beijerinckii (strain ATCC 51743 / NCIMB 8052) (Clostridium acetobutylicum).